The primary structure comprises 201 residues: CASP-like protein 2B2 (201 aa).

Residues 1–28 (MSYLGVGVSPGNVSGSTTKMKLIDRKVR) are Cytoplasmic-facing. A helical transmembrane segment spans residues 29-49 (VTELILRCLVCVLALVAAILI). The Extracellular segment spans residues 50–71 (ATDVQVREIFMIQKKAKFTDMK). The chain crosses the membrane as a helical span at residues 72 to 92 (ALVLLVVVNGIAAGYSLVQAV). Residues 93–108 (RCVVGLMKGRVLFSKP) lie on the Cytoplasmic side of the membrane. Residues 109–129 (LAWAIFFGDQAVAYLCVAGVA) form a helical membrane-spanning segment. Over 130 to 166 (AAAQSAAFAKLGEPELQWMKICNMYGKFCNQVGEGIA) the chain is Extracellular. A helical transmembrane segment spans residues 167 to 187 (SALFACIGMVLISCISAFGVF). At 188–201 (RLYGGSKSRPSSRW) the chain is on the cytoplasmic side.

It belongs to the Casparian strip membrane proteins (CASP) family. In terms of assembly, homodimer and heterodimers.

It localises to the cell membrane. The polypeptide is CASP-like protein 2B2 (Arabidopsis thaliana (Mouse-ear cress)).